We begin with the raw amino-acid sequence, 294 residues long: 4-hydroxy-tetrahydrodipicolinate synthase (294 aa).

Position 48 (T48) interacts with pyruvate. Y136 functions as the Proton donor/acceptor in the catalytic mechanism. Catalysis depends on K164, which acts as the Schiff-base intermediate with substrate. V206 lines the pyruvate pocket.

It belongs to the DapA family. As to quaternary structure, homotetramer; dimer of dimers.

Its subcellular location is the cytoplasm. The enzyme catalyses L-aspartate 4-semialdehyde + pyruvate = (2S,4S)-4-hydroxy-2,3,4,5-tetrahydrodipicolinate + H2O + H(+). The protein operates within amino-acid biosynthesis; L-lysine biosynthesis via DAP pathway; (S)-tetrahydrodipicolinate from L-aspartate: step 3/4. In terms of biological role, catalyzes the condensation of (S)-aspartate-beta-semialdehyde [(S)-ASA] and pyruvate to 4-hydroxy-tetrahydrodipicolinate (HTPA). In Desulforudis audaxviator (strain MP104C), this protein is 4-hydroxy-tetrahydrodipicolinate synthase.